The following is a 251-amino-acid chain: uncharacterized protein (251 aa).

The 116-residue stretch at 3–118 folds into the Response regulatory domain; sequence KVVICDDERI…QLEHILDILV (116 aa). A 4-aspartylphosphate modification is found at Asp-55. The HTH araC/xylS-type domain maps to 152-249; that stretch reads NQILSQIKQH…HMSPSDYNKL (98 aa). 2 DNA-binding regions (H-T-H motif) span residues 169-190 and 216-239; these read LDLINPIVVSESYAMRTFKEHV and HYEIAEKVGFSEYKMFCYHFKKYL.

Post-translationally, phosphorylated by SE_0166.

The protein resides in the cytoplasm. Functionally, probable member of the two-component regulatory system SE_0166/SE_0165. This is an uncharacterized protein from Staphylococcus epidermidis (strain ATCC 12228 / FDA PCI 1200).